Consider the following 435-residue polypeptide: MLDSKLLRTELDETAEKLARRGFKLDVETLRNLEEQRKSLQVKTEELQAQRNSRSKSIGQAKAKGDHEEADRIMADVANLGSELDEAKAALAELQQQIEDIALSVPNIPDDSVPLGKDENENVEVLRWGTPLAYDFEVKDHVDLGEMADGLDFASAVKISGSRFIVMKGQFARLHRALSQFMLDLHTEEHGYTEMYVPYLVNPDSLFGTGQLPKFGEDLFHTSPLTEQVSDVPLKKLSLIPTAEVPVTNMVRDTITDEADMPLKMTAHTPCFRSEAGSYGRDTRGLIRMHQFDKVELVQITRPEDSMAALEELTGHAEKVLQLLELPYRKVVLCTGDMGFGSRKTYDLEVWVPAQETYREISSCSNMWDFQARRMQARFRRKGEKKPELVHTLNGSGLAVGRTMVAILENFQQADGKIAIPQVLRKYMNGVEFIG.

The segment at 41–70 is disordered; sequence QVKTEELQAQRNSRSKSIGQAKAKGDHEEA. A compositionally biased stretch (polar residues) spans 49–58; it reads AQRNSRSKSI. 242–244 is a binding site for L-serine; it reads TAE. Residue 273 to 275 participates in ATP binding; it reads RSE. Position 296 (Glu296) interacts with L-serine. ATP is bound at residue 360–363; sequence EISS. Ser396 contacts L-serine.

This sequence belongs to the class-II aminoacyl-tRNA synthetase family. Type-1 seryl-tRNA synthetase subfamily. In terms of assembly, homodimer. The tRNA molecule binds across the dimer.

Its subcellular location is the cytoplasm. It carries out the reaction tRNA(Ser) + L-serine + ATP = L-seryl-tRNA(Ser) + AMP + diphosphate + H(+). It catalyses the reaction tRNA(Sec) + L-serine + ATP = L-seryl-tRNA(Sec) + AMP + diphosphate + H(+). It functions in the pathway aminoacyl-tRNA biosynthesis; selenocysteinyl-tRNA(Sec) biosynthesis; L-seryl-tRNA(Sec) from L-serine and tRNA(Sec): step 1/1. In terms of biological role, catalyzes the attachment of serine to tRNA(Ser). Is also able to aminoacylate tRNA(Sec) with serine, to form the misacylated tRNA L-seryl-tRNA(Sec), which will be further converted into selenocysteinyl-tRNA(Sec). The sequence is that of Serine--tRNA ligase from Aliivibrio fischeri (strain MJ11) (Vibrio fischeri).